A 390-amino-acid polypeptide reads, in one-letter code: Argininosuccinate synthase (390 aa).

Residue 6-14 (AYSGGLDTT) participates in ATP binding. Y84 contacts L-citrulline. ATP is bound at residue G114. L-aspartate-binding residues include T116, N120, and D121. N120 contacts L-citrulline. L-citrulline contacts are provided by R124, S171, S180, E253, and Y265.

The protein belongs to the argininosuccinate synthase family. Type 1 subfamily. In terms of assembly, homotetramer.

Its subcellular location is the cytoplasm. It carries out the reaction L-citrulline + L-aspartate + ATP = 2-(N(omega)-L-arginino)succinate + AMP + diphosphate + H(+). It participates in amino-acid biosynthesis; L-arginine biosynthesis; L-arginine from L-ornithine and carbamoyl phosphate: step 2/3. The polypeptide is Argininosuccinate synthase (Sulfurisphaera tokodaii (strain DSM 16993 / JCM 10545 / NBRC 100140 / 7) (Sulfolobus tokodaii)).